The primary structure comprises 510 residues: Protein ERGIC-53 (510 aa).

The N-terminal stretch at 1 to 30 is a signal peptide; that stretch reads MAGSRRRGLQARVRPLFCALLLSLSRFVGG. Residues 31-477 are Lumenal-facing; it reads DGVGGDPAAG…ELPPFPSCLS (447 aa). An L-type lectin-like domain is found at 44 to 267; it reads RRFEYKYSFK…DVLSFLTFQL (224 aa). 2 residues coordinate a carbohydrate: Ser-88 and Asp-121. Positions 152, 154, and 156 each coordinate Ca(2+). A carbohydrate-binding residues include Asn-156 and His-178. A Ca(2+)-binding site is contributed by Asp-181. Cys-190 and Cys-230 form a disulfide bridge. 251 to 253 is a binding site for a carbohydrate; it reads GGL. Residue Ser-425 is modified to Phosphoserine. A helical transmembrane segment spans residues 478–498; that stretch reads TVHFIIFVVVQTVLFIGYIMY. At 499–510 the chain is on the cytoplasmic side; that stretch reads RSQQEAAAKKFF. Residues 499–510 form a mediates interaction with RAB3GAP1, RAB3GAP2 and UBXN6 region; sequence RSQQEAAAKKFF. Positions 509 to 510 match the ER export motif motif; the sequence is FF.

In terms of assembly, exists both as a covalent disulfide-linked homohexamer, and a complex of three disulfide-linked dimers non-covalently kept together. Interacts with MCFD2. May interact with TMEM115. Interacts with RAB3GAP1 and RAB3GAP2. Interacts with UBXN6. Interacts with SERPINA1/alpha1-antitrypsin. Interacts with BET1.

The protein resides in the endoplasmic reticulum-Golgi intermediate compartment membrane. It is found in the golgi apparatus membrane. The protein localises to the endoplasmic reticulum membrane. Mannose-specific lectin. May recognize sugar residues of glycoproteins, glycolipids, or glycosylphosphatidyl inositol anchors and may be involved in the sorting or recycling of proteins, lipids, or both. The LMAN1-MCFD2 complex forms a specific cargo receptor for the ER-to-Golgi transport of selected proteins. The chain is Protein ERGIC-53 (LMAN1) from Chlorocebus aethiops (Green monkey).